The sequence spans 433 residues: Ribosomal protein uS12 methylthiotransferase RimO (433 aa).

The MTTase N-terminal domain occupies 6–122; sequence QSIFLLSLGC…IISVLGGSYR (117 aa). [4Fe-4S] cluster is bound by residues Cys-15, Cys-51, Cys-85, Cys-146, Cys-150, and Cys-153. A Radical SAM core domain is found at 132–362; that stretch reads LTPPHYAWLK…MELQESIAAE (231 aa). One can recognise a TRAM domain in the interval 365-432; the sequence is RELEGRVMKV…AYELHGRVND (68 aa).

Belongs to the methylthiotransferase family. RimO subfamily. [4Fe-4S] cluster serves as cofactor.

It localises to the cytoplasm. It catalyses the reaction L-aspartate(89)-[ribosomal protein uS12]-hydrogen + (sulfur carrier)-SH + AH2 + 2 S-adenosyl-L-methionine = 3-methylsulfanyl-L-aspartate(89)-[ribosomal protein uS12]-hydrogen + (sulfur carrier)-H + 5'-deoxyadenosine + L-methionine + A + S-adenosyl-L-homocysteine + 2 H(+). Its function is as follows. Catalyzes the methylthiolation of an aspartic acid residue of ribosomal protein uS12. This chain is Ribosomal protein uS12 methylthiotransferase RimO, found in Prosthecochloris aestuarii (strain DSM 271 / SK 413).